Reading from the N-terminus, the 362-residue chain is Peptide chain release factor 1 (362 aa).

Residue Q232 is modified to N5-methylglutamine.

It belongs to the prokaryotic/mitochondrial release factor family. Methylated by PrmC. Methylation increases the termination efficiency of RF1.

The protein resides in the cytoplasm. Its function is as follows. Peptide chain release factor 1 directs the termination of translation in response to the peptide chain termination codons UAG and UAA. The polypeptide is Peptide chain release factor 1 (Myxococcus xanthus).